The chain runs to 277 residues: 4-hydroxy-3-methylbut-2-enyl diphosphate reductase (277 aa).

[4Fe-4S] cluster is bound at residue Cys-12. (2E)-4-hydroxy-3-methylbut-2-enyl diphosphate is bound by residues His-36 and His-70. The dimethylallyl diphosphate site is built by His-36 and His-70. Residues His-36 and His-70 each contribute to the isopentenyl diphosphate site. Cys-92 contacts [4Fe-4S] cluster. His-120 contacts (2E)-4-hydroxy-3-methylbut-2-enyl diphosphate. Residue His-120 participates in dimethylallyl diphosphate binding. His-120 provides a ligand contact to isopentenyl diphosphate. The active-site Proton donor is the Glu-122. Thr-158 lines the (2E)-4-hydroxy-3-methylbut-2-enyl diphosphate pocket. Residue Cys-186 participates in [4Fe-4S] cluster binding. 3 residues coordinate (2E)-4-hydroxy-3-methylbut-2-enyl diphosphate: Ser-214, Asn-216, and Ser-258. Dimethylallyl diphosphate is bound by residues Ser-214, Asn-216, and Ser-258. Ser-214, Asn-216, and Ser-258 together coordinate isopentenyl diphosphate.

It belongs to the IspH family. [4Fe-4S] cluster serves as cofactor.

It catalyses the reaction isopentenyl diphosphate + 2 oxidized [2Fe-2S]-[ferredoxin] + H2O = (2E)-4-hydroxy-3-methylbut-2-enyl diphosphate + 2 reduced [2Fe-2S]-[ferredoxin] + 2 H(+). The catalysed reaction is dimethylallyl diphosphate + 2 oxidized [2Fe-2S]-[ferredoxin] + H2O = (2E)-4-hydroxy-3-methylbut-2-enyl diphosphate + 2 reduced [2Fe-2S]-[ferredoxin] + 2 H(+). The protein operates within isoprenoid biosynthesis; dimethylallyl diphosphate biosynthesis; dimethylallyl diphosphate from (2E)-4-hydroxy-3-methylbutenyl diphosphate: step 1/1. Its pathway is isoprenoid biosynthesis; isopentenyl diphosphate biosynthesis via DXP pathway; isopentenyl diphosphate from 1-deoxy-D-xylulose 5-phosphate: step 6/6. Its function is as follows. Catalyzes the conversion of 1-hydroxy-2-methyl-2-(E)-butenyl 4-diphosphate (HMBPP) into a mixture of isopentenyl diphosphate (IPP) and dimethylallyl diphosphate (DMAPP). Acts in the terminal step of the DOXP/MEP pathway for isoprenoid precursor biosynthesis. This chain is 4-hydroxy-3-methylbut-2-enyl diphosphate reductase, found in Campylobacter jejuni subsp. jejuni serotype O:6 (strain 81116 / NCTC 11828).